We begin with the raw amino-acid sequence, 514 residues long: 2,3-bisphosphoglycerate-independent phosphoglycerate mutase (514 aa).

Residues Asp-14 and Ser-64 each coordinate Mn(2+). Ser-64 acts as the Phosphoserine intermediate in catalysis. Substrate-binding positions include His-125, 155–156 (RD), Arg-187, Arg-193, 263–266 (RADR), and Lys-337. Mn(2+) contacts are provided by Asp-404, His-408, Asp-445, His-446, and His-464.

The protein belongs to the BPG-independent phosphoglycerate mutase family. Monomer. The cofactor is Mn(2+).

It catalyses the reaction (2R)-2-phosphoglycerate = (2R)-3-phosphoglycerate. Its pathway is carbohydrate degradation; glycolysis; pyruvate from D-glyceraldehyde 3-phosphate: step 3/5. Its function is as follows. Catalyzes the interconversion of 2-phosphoglycerate and 3-phosphoglycerate. The polypeptide is 2,3-bisphosphoglycerate-independent phosphoglycerate mutase (Pseudoalteromonas translucida (strain TAC 125)).